A 393-amino-acid chain; its full sequence is Nucleosome assembly protein 1-like 1-B (393 aa).

Basic and acidic residues predominate over residues methionine 1–threonine 10. A disordered region spans residues methionine 1–glutamine 38. A compositionally biased stretch (acidic residues) spans glutamate 11–glutamate 30. The short motif at tyrosine 126–alanine 151 is the NAP1L motif element. The short motif at isoleucine 274–histidine 280 is the Nuclear localization signal element. Residues alanine 347–proline 377 are compositionally biased toward acidic residues. Residues alanine 347–glutamine 393 form a disordered region.

This sequence belongs to the nucleosome assembly protein (NAP) family. As to quaternary structure, forms homomultimers. Interacts with histone b4. Interacts with the B-type cyclins ccnb1 and ccnb2. Post-translationally, phosphorylated by cyclin B-cdc2 kinase complexes.

It localises to the cytoplasm. Its subcellular location is the nucleus. Functionally, acts as a chaperone for the linker histone to facilitate deposition of histone B4 onto linker DNA. Required for both remodeling of sperm chromatin into nucleosomes, and linker histone binding to nucleosome core dimers. Plays a role in tissue-specific gene regulation. Required for primitive hemopoiesis, acting upstream of tal1/scl. In Xenopus laevis (African clawed frog), this protein is Nucleosome assembly protein 1-like 1-B (nap1l1-b).